Reading from the N-terminus, the 266-residue chain is Serine/arginine-rich splicing factor 12 (266 aa).

The disordered stretch occupies residues Ala42–Trp266. Residues Arg43–Arg62 show a composition bias toward basic residues. Over residues Lys102–His114 the composition is skewed to basic and acidic residues. The span at Arg115–Ser127 shows a compositional bias: basic residues. Residues Gly133–Glu144 are compositionally biased toward basic and acidic residues. A compositionally biased stretch (low complexity) spans Ser151–Ser166. Residues Gly183–Ser194 are compositionally biased toward basic residues. Composition is skewed to polar residues over residues Ser202–Gly212 and Ala235–Gln244. The span at Thr245–Trp266 shows a compositional bias: basic residues.

It belongs to the splicing factor SR family.

It is found in the nucleus. Splicing factor that seems to antagonize SR proteins in pre-mRNA splicing regulation. This Mus musculus (Mouse) protein is Serine/arginine-rich splicing factor 12 (Srsf12).